A 143-amino-acid chain; its full sequence is Large ribosomal subunit protein uL16 (143 aa).

Residues 1 to 17 (MLQPKRTKFRKAHKGRI) are compositionally biased toward basic residues. The tract at residues 1–20 (MLQPKRTKFRKAHKGRIHGN) is disordered.

This sequence belongs to the universal ribosomal protein uL16 family. Part of the 50S ribosomal subunit.

Its function is as follows. Binds 23S rRNA and is also seen to make contacts with the A and possibly P site tRNAs. The sequence is that of Large ribosomal subunit protein uL16 from Zymomonas mobilis subsp. mobilis (strain ATCC 31821 / ZM4 / CP4).